Reading from the N-terminus, the 729-residue chain is Fatty acid oxidation complex subunit alpha (729 aa).

Residues Met-1–Lys-189 form an enoyl-CoA hydratase/isomerase region. Substrate is bound at residue Asp-296. Positions Glu-311–Ala-729 are 3-hydroxyacyl-CoA dehydrogenase. NAD(+) contacts are provided by residues Met-324, Asp-343, Val-400–Glu-402, Lys-407, and Ser-429. His-450 serves as the catalytic For 3-hydroxyacyl-CoA dehydrogenase activity. An NAD(+)-binding site is contributed by Asn-453. Residues Asn-500 and Tyr-660 each coordinate substrate.

This sequence in the N-terminal section; belongs to the enoyl-CoA hydratase/isomerase family. The protein in the C-terminal section; belongs to the 3-hydroxyacyl-CoA dehydrogenase family. Heterotetramer of two alpha chains (FadB) and two beta chains (FadA).

The catalysed reaction is a (3S)-3-hydroxyacyl-CoA + NAD(+) = a 3-oxoacyl-CoA + NADH + H(+). It catalyses the reaction a (3S)-3-hydroxyacyl-CoA = a (2E)-enoyl-CoA + H2O. The enzyme catalyses a 4-saturated-(3S)-3-hydroxyacyl-CoA = a (3E)-enoyl-CoA + H2O. It carries out the reaction (3S)-3-hydroxybutanoyl-CoA = (3R)-3-hydroxybutanoyl-CoA. The catalysed reaction is a (3Z)-enoyl-CoA = a 4-saturated (2E)-enoyl-CoA. It catalyses the reaction a (3E)-enoyl-CoA = a 4-saturated (2E)-enoyl-CoA. It functions in the pathway lipid metabolism; fatty acid beta-oxidation. Involved in the aerobic and anaerobic degradation of long-chain fatty acids via beta-oxidation cycle. Catalyzes the formation of 3-oxoacyl-CoA from enoyl-CoA via L-3-hydroxyacyl-CoA. It can also use D-3-hydroxyacyl-CoA and cis-3-enoyl-CoA as substrate. This chain is Fatty acid oxidation complex subunit alpha, found in Escherichia fergusonii (strain ATCC 35469 / DSM 13698 / CCUG 18766 / IAM 14443 / JCM 21226 / LMG 7866 / NBRC 102419 / NCTC 12128 / CDC 0568-73).